The following is a 402-amino-acid chain: Multidrug resistance protein MdtH (402 aa).

Topologically, residues 1–12 (MSRVSQARNLGK) are cytoplasmic. Residues 13-33 (YFLLIDNMLVVLGFFVVFPLI) traverse the membrane as a helical segment. The Periplasmic portion of the chain corresponds to 34–98 (SIRFVDQMGW…GFATMGIAHE (65 aa)). The chain crosses the membrane as a helical span at residues 99-116 (PWLLWFSCLLSGLGGTLF). The Cytoplasmic segment spans residues 117–138 (DPPRSALVVKLIRPQQRGRFFS). Residues 139-159 (LLMMQDSAGAVIGALLGSWLL) form a helical membrane-spanning segment. At 160-164 (QYDFR) the chain is on the periplasmic side. A helical transmembrane segment spans residues 165–185 (LVCATGAVLFVLCAAFNAWLL). Topologically, residues 186–213 (PAWKLSTVRTPVREGMTRVMRDKRFVTY) are cytoplasmic. A helical membrane pass occupies residues 214 to 234 (VLTLAGYYMLAVQVMLMLPIM). Residues 235-243 (VNDVAGAPS) lie on the Periplasmic side of the membrane. The chain crosses the membrane as a helical span at residues 244-264 (AVKWMYAIEACLSLTLLYPIA). At 265 to 276 (RWSEKHFRLEHR) the chain is on the cytoplasmic side. A helical transmembrane segment spans residues 277 to 297 (LMAGLLIMSLSMMPVGMVSGL). Residues 298 to 299 (QQ) lie on the Periplasmic side of the membrane. The chain crosses the membrane as a helical span at residues 300 to 320 (LFTLICLFYIGSIIAEPARET). The Cytoplasmic segment spans residues 321–339 (LSASLADARARGSYMGCSR). A helical transmembrane segment spans residues 340–360 (LGLAIGGAIGYIGGGWLFDLG). Topologically, residues 361 to 367 (KSAHQPE) are periplasmic. Residues 368 to 388 (LPWMMLGIIGIFTFLALGWQF) form a helical membrane-spanning segment. Residues 389–402 (SQKRAARRLLERDA) are Cytoplasmic-facing.

The protein belongs to the major facilitator superfamily. DHA1 family. MdtH (TC 2.A.1.2.21) subfamily.

Its subcellular location is the cell inner membrane. Functionally, confers resistance to norfloxacin and enoxacin. This Escherichia coli (strain SE11) protein is Multidrug resistance protein MdtH.